The chain runs to 471 residues: BPI fold-containing family B member 1 (471 aa).

Residues 1-18 (MTNPWIVSLLLGATLVQA) form the signal peptide. Asn150, Asn157, Asn260, and Asn397 each carry an N-linked (GlcNAc...) asparagine glycan. A disulfide bridge connects residues Cys154 and Cys197.

Belongs to the BPI/LBP/Plunc superfamily. Plunc family.

It localises to the secreted. Its function is as follows. May play a role in innate immunity in mouth, nose and lungs. Binds bacterial lipopolysaccharide (LPS) and modulates the cellular responses to LPS. The sequence is that of BPI fold-containing family B member 1 (Bpifb1) from Rattus norvegicus (Rat).